Consider the following 425-residue polypeptide: GTPase Obg (425 aa).

The Obg domain occupies 1 to 158 (MFIDKARIFV…RWITLELKMI (158 aa)). The OBG-type G domain maps to 159-330 (ADVGLLGFPN…VIAYVSKMLK (172 aa)). Residues 165–172 (GFPNVGKS), 190–194 (FTTLT), 212–215 (DIPG), 282–285 (NKFD), and 311–313 (SAA) contribute to the GTP site. The Mg(2+) site is built by serine 172 and threonine 192. In terms of domain architecture, OCT spans 344–425 (YRPELDIGTE…IYELEFEFYN (82 aa)).

It belongs to the TRAFAC class OBG-HflX-like GTPase superfamily. OBG GTPase family. Monomer. The cofactor is Mg(2+).

Its subcellular location is the cytoplasm. In terms of biological role, an essential GTPase which binds GTP, GDP and possibly (p)ppGpp with moderate affinity, with high nucleotide exchange rates and a fairly low GTP hydrolysis rate. Plays a role in control of the cell cycle, stress response, ribosome biogenesis and in those bacteria that undergo differentiation, in morphogenesis control. The sequence is that of GTPase Obg from Clostridioides difficile (strain 630) (Peptoclostridium difficile).